A 547-amino-acid chain; its full sequence is MSLSSLLPTPTNAIWDREDERRLVARGAPKIGALVSAKIAAPPYGQRKDWVPHTDADFGDGGAFPEIHVAQYPLGLGAPGNVGKKSDALAVRLDDKGKVKYDAIARQGHGKDKIVYSSISQLLPAEVLAEDADELQRPDEETVMETTEETRLALEKLTNQKITSALPVRHAQKAGPAQYIRYTPSQQGDTFNSGAKQRVIRMVEAQLDPMEPPKFRINKKIPRGPPSPPAPVLHSPSRKVTVKEQKEWKIPPCISNWKNAKGYTIPLDKRLAADGRGLQQVHINEKFAKMAEALYIADRKAREAVEARSQLEKKLAQKEKEKKEDMLRMMAQRAREERAGLRNPEAAEPSGSGATGSEVRERNDLRAERQRERQRDRNLQRAAPEKRSKLQKERERDISEQIALGLPAKSAGNGETLFDQRLFNTTKGMDSGYGDDEAYNVYDKPWRDSNTLGAHIYRPSKQADSDNYGGDLDAIVNTKRFVPDKQFSGASKEAAAGQRSGPVEFEKEEDPFGLDQFLNMAKKAPKRAEEKNNERSSHSDRKRSKRD.

Positions 177–343 are SNW; the sequence is AQYIRYTPSQ…AREERAGLRN (167 aa). Phosphoserine is present on residues Ser-227 and Ser-235. Disordered stretches follow at residues 333 to 398 and 486 to 547; these read RARE…ERDI and QFSG…SKRD. Basic and acidic residues-rich tracts occupy residues 358–398 and 526–539; these read EVRE…ERDI and KRAEEKNNERSSHS.

The protein belongs to the SNW family.

It localises to the nucleus. Its function is as follows. May play a role in chromatin structure and function. The polypeptide is Puff-specific protein Bx42 (Bx42) (Drosophila melanogaster (Fruit fly)).